We begin with the raw amino-acid sequence, 292 residues long: Phosphoribosylaminoimidazole-succinocarboxamide synthase (292 aa).

Belongs to the SAICAR synthetase family.

It catalyses the reaction 5-amino-1-(5-phospho-D-ribosyl)imidazole-4-carboxylate + L-aspartate + ATP = (2S)-2-[5-amino-1-(5-phospho-beta-D-ribosyl)imidazole-4-carboxamido]succinate + ADP + phosphate + 2 H(+). The protein operates within purine metabolism; IMP biosynthesis via de novo pathway; 5-amino-1-(5-phospho-D-ribosyl)imidazole-4-carboxamide from 5-amino-1-(5-phospho-D-ribosyl)imidazole-4-carboxylate: step 1/2. In Elusimicrobium minutum (strain Pei191), this protein is Phosphoribosylaminoimidazole-succinocarboxamide synthase.